Reading from the N-terminus, the 498-residue chain is Lysine--tRNA ligase (498 aa).

Residues Glu409 and Glu416 each coordinate Mg(2+).

It belongs to the class-II aminoacyl-tRNA synthetase family. Homodimer. The cofactor is Mg(2+).

It localises to the cytoplasm. It carries out the reaction tRNA(Lys) + L-lysine + ATP = L-lysyl-tRNA(Lys) + AMP + diphosphate. This is Lysine--tRNA ligase from Teredinibacter turnerae (strain ATCC 39867 / T7901).